Consider the following 243-residue polypeptide: Uridine-cytidine kinase B (243 aa).

Residue 22-29 coordinates ATP; the sequence is GGTASGKT.

It belongs to the uridine kinase family.

It catalyses the reaction uridine + ATP = UMP + ADP + H(+). The enzyme catalyses cytidine + ATP = CMP + ADP + H(+). It participates in pyrimidine metabolism; CTP biosynthesis via salvage pathway; CTP from cytidine: step 1/3. Its pathway is pyrimidine metabolism; UMP biosynthesis via salvage pathway; UMP from uridine: step 1/1. Catalyzes the conversion of uridine into uridine monophosphate and cytidine into cytidine monophosphate in the pyrimidine salvage pathway. The chain is Uridine-cytidine kinase B (udkB) from Dictyostelium discoideum (Social amoeba).